A 554-amino-acid polypeptide reads, in one-letter code: Cytochrome P450 monooxygenase himC (554 aa).

The chain crosses the membrane as a helical span at residues 52–72 (YSVASVAIAGFTALVVSVALY). N-linked (GlcNAc...) asparagine glycosylation is found at N110, N328, N414, and N425. Heme is bound at residue C501.

This sequence belongs to the cytochrome P450 family. Requires heme as cofactor.

The protein resides in the membrane. It participates in secondary metabolite biosynthesis. Its function is as follows. Cytochrome P450 monooxygenase; part of the him gene cluster that mediates the biosynthesis of himeic acid A, a ubiquitin-activating enzyme (E1) inhibitor. First, himA, together with the trans-enoyl reductase himH, catalyzes the formation of apolyketide chain, which is then condensed with leucine by the NRPS activity of himA. Dieckmann cyclization and release from himA gives a tetramic acid intermediate as the product of himA PKS-NRPS. HimG then catalyzes alpha-oxidation of the tetramic acid ring, with a subsequent rearrangement to yield apyrone intermediate. Two terminal methyl groups of polyketide and amide side chains are oxidized to carboxylic acids by himC cytochrome P450 monooxygenase to form himeic acid A. Himeic acid A is further converted to himeic acid B and C during culture growth. No gene responsible for pyrone to pyridone conversion was found in the him gene cluster and himeic acid A is non-enzymatically converted to himeic acid C by the incorporation of an ammonium nitrogen atom in a pH5 buffer, and to himeic acid B at a conversion ratio of 50% during incubation in MeOH for 5 days. This chain is Cytochrome P450 monooxygenase himC, found in Aspergillus japonicus.